The chain runs to 236 residues: Lipoprotein NlpE (236 aa).

The signal sequence occupies residues 1 to 20; sequence MVKKAIVTAMAVISLFTLMG. Cysteine 21 is lipidated: N-palmitoyl cysteine. A lipid anchor (S-diacylglycerol cysteine) is attached at cysteine 21. Residues 21–100 are N-terminal domain; it reads CNNRAEVDTL…WARTADKLVL (80 aa). The Periplasmic segment spans residues 21-236; it reads CNNRAEVDTL…PNQDCSSLGQ (216 aa). The short motif at 51 to 54 is the CXXC element; it reads CADC. A C-terminal domain region spans residues 126–236; it reads PIESQFNYTL…PNQDCSSLGQ (111 aa). A could contain a copper-binding motif region spans residues 144-156; that stretch reads MTPMTLRGMYFYM. Cysteines 165 and 231 form a disulfide.

In terms of assembly, probably exists as a monomer in vivo, can however form homodimers which swap domains. In terms of processing, palmitoylated. Seems to only form a disulfide bond between Cys-165 and Cys-231. The 2 other cysteine residues may however be chemically active.

The protein localises to the cell outer membrane. In terms of biological role, involved in copper homeostasis, could be involved in both copper efflux and the delivery of copper to copper-dependent enzymes. Required for efficient binding of stationary phase cells to hydrophobic surfaces, part of the process of biofilm formation. Functions during envelope stress responses; when overproduced induces degP through the activation of the two-component envelope stress response system CpxA/CpxR. DegP induction seems to require membrane anchoring of this protein. Structural changes and/or interaction of the CXXC motif with its environment may lead to activation of the Cpx stress response. This is Lipoprotein NlpE from Escherichia coli (strain K12).